A 232-amino-acid polypeptide reads, in one-letter code: UPF0758 protein Clos_1766 (232 aa).

The MPN domain occupies 110–232 (KIKGPDDVSN…YFSMKEHKLI (123 aa)). Zn(2+)-binding residues include histidine 181, histidine 183, and aspartate 194. Positions 181–194 (HNHPSGDPNPSGED) match the JAMM motif motif.

This sequence belongs to the UPF0758 family.

This is UPF0758 protein Clos_1766 from Alkaliphilus oremlandii (strain OhILAs) (Clostridium oremlandii (strain OhILAs)).